The primary structure comprises 116 residues: Non-specific lipid-transfer protein (116 aa).

The signal sequence occupies residues 1 to 22 (MSLKLACVVVLCMVVGAPLAQG). Cystine bridges form between Cys36–Cys52, Cys53–Cys98, and Cys73–Cys112.

It belongs to the plant LTP family.

In terms of biological role, plant non-specific lipid-transfer proteins transfer phospholipids as well as galactolipids across membranes. May play a role in wax or cutin deposition in the cell walls of expanding epidermal cells and certain secretory tissues. This chain is Non-specific lipid-transfer protein, found in Gossypium hirsutum (Upland cotton).